Consider the following 146-residue polypeptide: MKERYGTVYKGSQRLIDEESGEVIEVDKLYRKQTSGNFVKAYIVQLISMLDMIGGKKLKIVNYILDNVHLSNNTMIATTREIAKATGTSLQTVITTLKILEEGNIIKRKTGVLMLNPELLMRGDDQKQKYLLLEFGNFEQEANEID.

In Bacillus subtilis, this protein is Replication and maintenance protein (repL).